A 194-amino-acid polypeptide reads, in one-letter code: Small ribosomal subunit protein uS7 (194 aa).

The protein belongs to the universal ribosomal protein uS7 family. Part of the 30S ribosomal subunit.

One of the primary rRNA binding proteins, it binds directly to 16S rRNA where it nucleates assembly of the head domain of the 30S subunit. Is located at the subunit interface close to the decoding center. This chain is Small ribosomal subunit protein uS7, found in Sulfurisphaera tokodaii (strain DSM 16993 / JCM 10545 / NBRC 100140 / 7) (Sulfolobus tokodaii).